Here is a 429-residue protein sequence, read N- to C-terminus: D-amino acid dehydrogenase 1 (429 aa).

Residue 3-17 (VLVLGSGVIGVTSAY) coordinates FAD.

It belongs to the DadA oxidoreductase family. FAD serves as cofactor.

It carries out the reaction a D-alpha-amino acid + A + H2O = a 2-oxocarboxylate + AH2 + NH4(+). Functionally, oxidative deamination of D-amino acids. The polypeptide is D-amino acid dehydrogenase 1 (dadA1) (Ralstonia nicotianae (strain ATCC BAA-1114 / GMI1000) (Ralstonia solanacearum)).